Reading from the N-terminus, the 116-residue chain is Large ribosomal subunit protein bL17 (116 aa).

The protein belongs to the bacterial ribosomal protein bL17 family. As to quaternary structure, part of the 50S ribosomal subunit. Contacts protein L32.

The protein is Large ribosomal subunit protein bL17 of Cyanothece sp. (strain PCC 7425 / ATCC 29141).